Reading from the N-terminus, the 69-residue chain is U2-agatoxin-Ao1c (69 aa).

The N-terminal stretch at 1-20 (MKAIISLLLISAMVFSMIEA) is a signal peptide. A propeptide spanning residues 21–34 (VPVEEGLQLFEGER) is cleaved from the precursor. 3 cysteine pairs are disulfide-bonded: cysteine 36–cysteine 52, cysteine 43–cysteine 57, and cysteine 51–cysteine 67. At leucine 68 the chain carries Leucine amide.

The protein belongs to the neurotoxin 01 (U2-agtx) family. Expressed by the venom gland.

It is found in the secreted. Insect active toxin causing rapid but reversible paralysis in crickets. No activity shown in mammals. Does not show effect on mammalian voltage-gated calcium channels. The chain is U2-agatoxin-Ao1c from Agelena orientalis (Funnel-web spider).